Consider the following 196-residue polypeptide: GTP cyclohydrolase-2 (196 aa).

49–53 provides a ligand contact to GTP; the sequence is RVHSE. Cysteine 54, cysteine 65, and cysteine 67 together coordinate Zn(2+). Residues glutamine 70, 92–94, and threonine 114 contribute to the GTP site; that span reads EGR. Aspartate 126 acts as the Proton acceptor in catalysis. The active-site Nucleophile is arginine 128. Residues threonine 149 and lysine 154 each contribute to the GTP site.

It belongs to the GTP cyclohydrolase II family. As to quaternary structure, homodimer. Zn(2+) is required as a cofactor.

The catalysed reaction is GTP + 4 H2O = 2,5-diamino-6-hydroxy-4-(5-phosphoribosylamino)-pyrimidine + formate + 2 phosphate + 3 H(+). The protein operates within cofactor biosynthesis; riboflavin biosynthesis; 5-amino-6-(D-ribitylamino)uracil from GTP: step 1/4. In terms of biological role, catalyzes the conversion of GTP to 2,5-diamino-6-ribosylamino-4(3H)-pyrimidinone 5'-phosphate (DARP), formate and pyrophosphate. The chain is GTP cyclohydrolase-2 from Salmonella choleraesuis (strain SC-B67).